Reading from the N-terminus, the 681-residue chain is MAFTGATLTTSTIAATAASGPLMDYLWMLILGFIIAFVLAFSVGANDVANSFGTAVGSGVVTLKQACILASIFETVGSVLLGAKVSETIRKGLIDVEMYNTTQQLLMAGSVSAMFGSAVWQLVASFLKLPISGTHCIVGATIGFSLVAKGQEGVKWSELIKIVMSWFISPLLSGIMSGILFFLVRAFILRKTDPVPNGLRALPVFYACTVGINLFSIMYTGAPLLGFDKLPLWGTILISVGCAVFCALIVWFFVCPRMKRKIEREIKSSPSESPLMEKKNSLKEDHEETKLSVSDIETRSPVSEVGSATVPLRAVVEERTVSFKLGDLEEAPERERLPSVDLKEETSIDSAMNGAVQLPNGNLVQFNQAVSNQMNSSGHYQYHTVHKDSGLYKELLHKLHLAKVGDCMGDSGDKPLRRNNSYTSYTMAICGMPLDSFRAKEGEQKGEEMEKLTWPNAESKKRIRMDSYTSYCNAVSDIHSASEMDMSVKAEMGLGDRKGSSSSLEEWYDQDKPEVSLLFQFLQILTACFGSFAHGGNDVSNAIGPLVALYLVYDTGDVSSKVATPIWLLLYGGVGICIGLWVWGRRVIQTMGKDLTPITPSSGFSIELASALTVVIASNIGLPISTTHCKVGSVVSVGWLRSKKAVDWRLFRNIFMAWFVTVPISGVISAAIMAVFKYVIL.

6 consecutive transmembrane segments (helical) span residues 25–45, 66–86, 106–126, 162–182, 207–227, and 234–254; these read YLWM…SVGA, ACIL…AKVS, LMAG…VASF, IVMS…ILFF, ACTV…LLGF, and GTIL…WFFV. Residues S269 and S273 each carry the phosphoserine modification. Residues 269 to 296 form a disordered region; that stretch reads SPSESPLMEKKNSLKEDHEETKLSVSDI. A compositionally biased stretch (basic and acidic residues) spans 275-290; sequence LMEKKNSLKEDHEETK. Helical transmembrane passes span 515–535, 562–582, 604–624, and 654–674; these read VSLL…FAHG, VATP…GLWV, FSIE…GLPI, and IFMA…AIMA. The interval 554–562 is a; it reads DTGDVSSKV.

Belongs to the inorganic phosphate transporter (PiT) (TC 2.A.20) family.

The protein localises to the cell membrane. It catalyses the reaction 2 Na(+)(out) + phosphate(out) = 2 Na(+)(in) + phosphate(in). Functionally, sodium-phosphate symporter which preferentially transports the monovalent form of phosphate with a stoichiometry of two sodium ions per phosphate ion. May play a role in extracellular matrix and cartilage calcification as well as in vascular calcification. Essential for cell proliferation but this function is independent of its phosphate transporter activity. The chain is Sodium-dependent phosphate transporter 1 (Slc20a1) from Felis catus (Cat).